A 220-amino-acid polypeptide reads, in one-letter code: 7-cyano-7-deazaguanine synthase (220 aa).

10–20 serves as a coordination point for ATP; that stretch reads FSGGQDSTTCL. The Zn(2+) site is built by Cys186, Cys195, Cys198, and Cys201.

The protein belongs to the QueC family. In terms of assembly, homodimer. The cofactor is Zn(2+).

The catalysed reaction is 7-carboxy-7-deazaguanine + NH4(+) + ATP = 7-cyano-7-deazaguanine + ADP + phosphate + H2O + H(+). It participates in purine metabolism; 7-cyano-7-deazaguanine biosynthesis. Functionally, catalyzes the ATP-dependent conversion of 7-carboxy-7-deazaguanine (CDG) to 7-cyano-7-deazaguanine (preQ(0)). The sequence is that of 7-cyano-7-deazaguanine synthase from Bacillus mycoides (strain KBAB4) (Bacillus weihenstephanensis).